A 78-amino-acid polypeptide reads, in one-letter code: Putative permease-like protein YdzE (78 aa).

The next 3 membrane-spanning stretches (helical) occupy residues 2 to 22, 27 to 47, and 49 to 69; these read YLGI…LQLL, GGLF…ILLG, and QIGG…LLVI. Positions 2–70 constitute an EamA domain; the sequence is YLGIVSTACA…ILSGVLLVIK (69 aa).

The protein belongs to the EamA transporter family.

It is found in the cell membrane. The protein is Putative permease-like protein YdzE (ydzE) of Bacillus subtilis (strain 168).